The chain runs to 367 residues: Serine/threonine-protein kinase Sgk2 (367 aa).

A disordered region spans residues 1–28 (MASSPVGVPSPQPSRANGNINLGPSANP). Ser-10 carries the post-translational modification Phosphoserine. Positions 15–28 (RANGNINLGPSANP) are enriched in polar residues. Residues 35 to 292 (FDFLKVIGKG…FLDIKNHMFF (258 aa)) form the Protein kinase domain. ATP-binding positions include 41–49 (IGKGNYGKV) and Lys-64. The short motif at 68-78 (KKSILKNKEQN) is the Nuclear localization signal element. Residue Asp-159 is the Proton acceptor of the active site. The residue at position 193 (Thr-193) is a Phosphothreonine; by PDPK1. The region spanning 293-367 (SPINWDDLYH…AQDDDDILDS (75 aa)) is the AGC-kinase C-terminal domain. Phosphoserine is present on residues Ser-334 and Ser-356. Tyr-357 carries the post-translational modification Phosphotyrosine.

It belongs to the protein kinase superfamily. AGC Ser/Thr protein kinase family. In terms of processing, activated by phosphorylation on Ser-356 by an unknown kinase (may be mTORC2 but not confirmed), transforming it into a substrate for PDPK1 which then phosphorylates it on Thr-193.

Its subcellular location is the cytoplasm. It is found in the nucleus. The enzyme catalyses L-seryl-[protein] + ATP = O-phospho-L-seryl-[protein] + ADP + H(+). It catalyses the reaction L-threonyl-[protein] + ATP = O-phospho-L-threonyl-[protein] + ADP + H(+). Its activity is regulated as follows. Two specific sites, one in the kinase domain (Thr-193) and the other in the C-terminal regulatory region (Ser-356), need to be phosphorylated for its full activation. Its function is as follows. Serine/threonine-protein kinase which is involved in the regulation of a wide variety of ion channels, membrane transporters, cell growth, survival and proliferation. Up-regulates Na(+) channels: SCNN1A/ENAC, K(+) channels: KCNA3/Kv1.3, KCNE1 and KCNQ1, amino acid transporter: SLC6A19, glutamate transporter: SLC1A6/EAAT4, glutamate receptors: GRIA1/GLUR1 and GRIK2/GLUR6, Na(+)/H(+) exchanger: SLC9A3/NHE3, and the Na(+)/K(+) ATPase. This Mus musculus (Mouse) protein is Serine/threonine-protein kinase Sgk2 (Sgk2).